A 339-amino-acid chain; its full sequence is Anthranilate phosphoribosyltransferase (339 aa).

5-phospho-alpha-D-ribose 1-diphosphate is bound by residues glycine 79, glycine 82–aspartate 83, threonine 87, asparagine 89–threonine 92, lysine 107–serine 115, and serine 119. Glycine 79 contributes to the anthranilate binding site. Serine 91 contributes to the Mg(2+) binding site. Anthranilate is bound at residue asparagine 110. Arginine 165 serves as a coordination point for anthranilate. Residues aspartate 224 and glutamate 225 each contribute to the Mg(2+) site.

Belongs to the anthranilate phosphoribosyltransferase family. Homodimer. Mg(2+) serves as cofactor.

It carries out the reaction N-(5-phospho-beta-D-ribosyl)anthranilate + diphosphate = 5-phospho-alpha-D-ribose 1-diphosphate + anthranilate. It participates in amino-acid biosynthesis; L-tryptophan biosynthesis; L-tryptophan from chorismate: step 2/5. Its function is as follows. Catalyzes the transfer of the phosphoribosyl group of 5-phosphorylribose-1-pyrophosphate (PRPP) to anthranilate to yield N-(5'-phosphoribosyl)-anthranilate (PRA). This is Anthranilate phosphoribosyltransferase from Geobacillus stearothermophilus (Bacillus stearothermophilus).